The chain runs to 162 residues: uncharacterized protein (162 aa).

Helical transmembrane passes span 15–40 (TIYSIVGIFLIIILDVTVAVALYFLL), 47–66 (ISMLMSLFRIVYAAIFTTAL), 76–98 (YSILDLGYIFFGIHLFLLGFLVY), 105–124 (KWLGALIFIASTGYIIDPLL), and 128–150 (GYAVEIGMYTFFGEVLFAFWLVI).

Its subcellular location is the cell membrane. This is an uncharacterized protein from Archaeoglobus fulgidus (strain ATCC 49558 / DSM 4304 / JCM 9628 / NBRC 100126 / VC-16).